A 510-amino-acid polypeptide reads, in one-letter code: Light-independent protochlorophyllide reductase subunit B (510 aa).

Position 36 (D36) interacts with [4Fe-4S] cluster. D296 acts as the Proton donor in catalysis. 431 to 432 (GM) serves as a coordination point for substrate.

This sequence belongs to the ChlB/BchB/BchZ family. In terms of assembly, protochlorophyllide reductase is composed of three subunits; ChlL, ChlN and ChlB. Forms a heterotetramer of two ChlB and two ChlN subunits. [4Fe-4S] cluster serves as cofactor.

The enzyme catalyses chlorophyllide a + oxidized 2[4Fe-4S]-[ferredoxin] + 2 ADP + 2 phosphate = protochlorophyllide a + reduced 2[4Fe-4S]-[ferredoxin] + 2 ATP + 2 H2O. It participates in porphyrin-containing compound metabolism; chlorophyll biosynthesis (light-independent). In terms of biological role, component of the dark-operative protochlorophyllide reductase (DPOR) that uses Mg-ATP and reduced ferredoxin to reduce ring D of protochlorophyllide (Pchlide) to form chlorophyllide a (Chlide). This reaction is light-independent. The NB-protein (ChlN-ChlB) is the catalytic component of the complex. The chain is Light-independent protochlorophyllide reductase subunit B from Synechococcus sp. (strain JA-3-3Ab) (Cyanobacteria bacterium Yellowstone A-Prime).